The following is a 139-amino-acid chain: MNETFIPASDYKKKNWCLIDCKDQKLGRIAVVISRLLSGKQKLHYHPAFDVGDYVVVINAQDMIFDSQQPRFSVNVPGRPGRLLKQVINALPSQLLMTAIYGMLPEGSAKKSLPKRLKIYNGPDHPHAAQNPIKLDEFI.

Belongs to the universal ribosomal protein uL13 family. As to quaternary structure, part of the 50S ribosomal subunit.

It localises to the plastid. It is found in the chloroplast. This chain is Large ribosomal subunit protein uL13c, found in Trieres chinensis (Marine centric diatom).